The following is a 439-amino-acid chain: Dolichyl-diphosphooligosaccharide--protein glycosyltransferase 48 kDa subunit (439 aa).

The signal sequence occupies residues 1 to 26 (MATRAARVWSGWWLLLLPLLGLAGAS). Topologically, residues 27–409 (GPRTLVLLDN…QYERFIPSAY (383 aa)) are lumenal. Residues 410-430 (PYYASAFSMMLGLFIFSVVFL) traverse the membrane as a helical segment. The Cytoplasmic segment spans residues 431-439 (HMKEKEKSD).

This sequence belongs to the DDOST 48 kDa subunit family. In terms of assembly, component of the oligosaccharyltransferase (OST) complex. OST exists in two different complex forms which contain common core subunits RPN1, RPN2, OST48, OST4, DAD1 and TMEM258, either STT3A or STT3B as catalytic subunits, and form-specific accessory subunits. STT3A complex assembly occurs through the formation of 3 subcomplexes. Subcomplex 1 contains RPN1 and TMEM258, subcomplex 2 contains the STT3A-specific subunits STT3A, DC2/OSTC, and KCP2 as well as the core subunit OST4, and subcomplex 3 contains RPN2, DAD1, and OST48. The STT3A complex can form stable complexes with the Sec61 complex or with both the Sec61 and TRAP complexes. Interacts with SMIM22.

It localises to the endoplasmic reticulum membrane. It participates in protein modification; protein glycosylation. Its function is as follows. Subunit of the oligosaccharyl transferase (OST) complex that catalyzes the initial transfer of a defined glycan (Glc(3)Man(9)GlcNAc(2) in eukaryotes) from the lipid carrier dolichol-pyrophosphate to an asparagine residue within an Asn-X-Ser/Thr consensus motif in nascent polypeptide chains, the first step in protein N-glycosylation. N-glycosylation occurs cotranslationally and the complex associates with the Sec61 complex at the channel-forming translocon complex that mediates protein translocation across the endoplasmic reticulum (ER). All subunits are required for a maximal enzyme activity. Required for the assembly of both SST3A- and SS3B-containing OST complexes. This is Dolichyl-diphosphooligosaccharide--protein glycosyltransferase 48 kDa subunit from Bos taurus (Bovine).